Reading from the N-terminus, the 252-residue chain is MAAATDGGGLPLLADKAASHSHHHHPERHFTSGEVVRDVIMGVSDGLTVPFALAAGLSGASAPSSLVLTAGLAEVAAGAISMGLGGYLAAKSEADHYQREMKREQEEIIAVPDTEAAEIGEIMSQYGLEPHEYGPVVDGLRRNPQAWLDFMMRFELGLEKPDPKRAIQSALTIALSYVIGGLVPLLPYMFISTAQNAMLTSVGVTLVALLFFGYIKGRFTGNRPFLSAVQTAIIGALASAAAYGMAKAVQTR.

Topologically, residues 1–38 are cytoplasmic; sequence MAAATDGGGLPLLADKAASHSHHHHPERHFTSGEVVRD. A helical membrane pass occupies residues 39 to 59; that stretch reads VIMGVSDGLTVPFALAAGLSG. At 60 to 65 the chain is on the vacuolar side; that stretch reads ASAPSS. Residues 66-86 form a helical membrane-spanning segment; the sequence is LVLTAGLAEVAAGAISMGLGG. The Cytoplasmic segment spans residues 87–170; it reads YLAAKSEADH…PDPKRAIQSA (84 aa). The cytoplasmic metal binding domain (MBD) stretch occupies residues 92–167; it reads SEADHYQREM…LEKPDPKRAI (76 aa). Glu104, Glu107, Glu115, Glu118, Met151, and Glu155 together coordinate Fe cation. Residues 171–191 traverse the membrane as a helical segment; sequence LTIALSYVIGGLVPLLPYMFI. At 192–196 the chain is on the vacuolar side; that stretch reads STAQN. The chain crosses the membrane as a helical span at residues 197–217; the sequence is AMLTSVGVTLVALLFFGYIKG. Over 218-224 the chain is Cytoplasmic; sequence RFTGNRP. The helical transmembrane segment at 225–245 threads the bilayer; that stretch reads FLSAVQTAIIGALASAAAYGM. Topologically, residues 246 to 252 are vacuolar; it reads AKAVQTR.

It belongs to the CCC1 family. Homodimer. The dimeric interaction is mediated by both the transmembrane domains (TMDs) and the cytoplasmic metal binding domain (MBD). Highly expressed in leaf blades. Expressed in leaf sheaths.

The protein localises to the vacuole membrane. The enzyme catalyses Fe(2+)(in) = Fe(2+)(out). Functionally, vacuolar iron transporter involved in the transfer of iron ions from the cytosol to the vacuole for intracellular iron storage. Vacuolar iron storage is required for seed embryo and seedling development. May be involved in the regulation of iron translocation between flag leaves and seeds. Can transport zinc ions from the cytosol to the vacuole. This Oryza sativa subsp. japonica (Rice) protein is Vacuolar iron transporter 1.